Here is a 595-residue protein sequence, read N- to C-terminus: Transketolase-like protein 1 (595 aa).

Residue 93–95 (GWP) coordinates thiamine diphosphate. Mg(2+)-binding residues include D125, N155, and I157. N155 serves as a coordination point for thiamine diphosphate. 3 residues coordinate thiamine diphosphate: K217, E339, and F365. E339 (proton donor) is an active-site residue. Substrate contacts are provided by H389 and D397. H401 is a thiamine diphosphate binding site.

Belongs to the transketolase family. Homodimer. Requires Mg(2+) as cofactor. The cofactor is Ca(2+). It depends on Mn(2+) as a cofactor. Co(2+) serves as cofactor. Thiamine diphosphate is required as a cofactor. As to expression, not expressed in the embryonic neocortex.

The protein resides in the cytoplasm. The enzyme catalyses D-sedoheptulose 7-phosphate + D-glyceraldehyde 3-phosphate = aldehydo-D-ribose 5-phosphate + D-xylulose 5-phosphate. Its function is as follows. Catalyzes the transfer of a two-carbon ketol group from a ketose donor to an aldose acceptor, via a covalent intermediate with the cofactor thiamine pyrophosphate. This is Transketolase-like protein 1 from Mus musculus (Mouse).